The primary structure comprises 126 residues: MPFFGNTFSPKKTPPRKSASLSNLHSLDRSTREVELGLEYGSPTMNLAGQSLKFENGQWIAETGVSGGVDRREVQRLRRRNQQLEEENNLLRLKVDILLDMLSESTAESHLMEKELDELRISRKRK.

The span at Met-1–Pro-10 shows a compositional bias: polar residues. The segment at Met-1–Ser-26 is disordered. Ser-9 and Ser-20 each carry phosphoserine. Positions Ile-60–Met-112 are minimal region for the interaction with PKD2. Residues Gly-67–Arg-125 are a coiled coil. The tract at residues Leu-77–Leu-98 is leucine-zipper; mediates homodimerization.

The protein belongs to the chibby family. As to quaternary structure, homodimer. Homodimerization is essential for nuclear localization and interaction with KPNA4 but is dispensable for interaction with CTNNB1. Interacts with polycystin-2/PKD2 and GM130. Interacts with the C-terminal region of CTNNB1. Interacts (C-terminus) with TCIM (C-terminus), TCIM competes with CTNNB1 for the interaction with CBY1. Interacts with FAM92A; this interaction facilitates targeting of FAM92A to cilium basal body. Interacts with CIBAR2. Interacts with KPNA4. In terms of tissue distribution, widely expressed. Expressed at higher levels in heart, skeletal muscle, kidney and placenta. Also found in brain, lung, liver and testis. Significantly down-regulated in thyroid and metastatic uterine tumors.

Its subcellular location is the nucleus speckle. The protein localises to the cytoplasm. The protein resides in the cytoskeleton. It localises to the cilium basal body. It is found in the microtubule organizing center. Its subcellular location is the centrosome. The protein localises to the centriole. The protein resides in the golgi apparatus. It localises to the trans-Golgi network. It is found in the cell projection. Its subcellular location is the cilium. The protein localises to the flagellum. The protein resides in the nucleus. Functionally, inhibits the Wnt/Wingless pathway by binding to CTNNB1/beta-catenin and inhibiting beta-catenin-mediated transcriptional activation through competition with TCF/LEF transcription factors. Has also been shown to play a role in regulating the intracellular trafficking of polycystin-2/PKD2 and possibly of other intracellular proteins. Promotes adipocyte and cardiomyocyte differentiation. The polypeptide is Protein chibby homolog 1 (CBY1) (Homo sapiens (Human)).